The primary structure comprises 443 residues: Chromosomal replication initiator protein DnaA (443 aa).

A domain I, interacts with DnaA modulators region spans residues 1–73 (MYGDYRQIWE…YDAASKVTNR (73 aa)). The interval 73-106 (RFIEIKILSEDEEEYREIKESIERENSSESTLLS) is domain II. Residues 107–323 (TLNPKYTFDT…GALIRIVAFA (217 aa)) form a domain III, AAA+ region region. ATP-binding residues include Gly151, Gly153, Lys154, and Thr155. The domain IV, binds dsDNA stretch occupies residues 324–443 (TLTKSNIDLE…EELKKRIKGY (120 aa)).

Belongs to the DnaA family. In terms of assembly, oligomerizes as a right-handed, spiral filament on DNA at oriC.

It localises to the cytoplasm. Plays an essential role in the initiation and regulation of chromosomal replication. ATP-DnaA binds to the origin of replication (oriC) to initiate formation of the DNA replication initiation complex once per cell cycle. Binds the DnaA box (a 9 base pair repeat at the origin) and separates the double-stranded (ds)DNA. Forms a right-handed helical filament on oriC DNA; dsDNA binds to the exterior of the filament while single-stranded (ss)DNA is stabiized in the filament's interior. The ATP-DnaA-oriC complex binds and stabilizes one strand of the AT-rich DNA unwinding element (DUE), permitting loading of DNA polymerase. After initiation quickly degrades to an ADP-DnaA complex that is not apt for DNA replication. Binds acidic phospholipids. This chain is Chromosomal replication initiator protein DnaA, found in Caldanaerobacter subterraneus subsp. tengcongensis (strain DSM 15242 / JCM 11007 / NBRC 100824 / MB4) (Thermoanaerobacter tengcongensis).